Here is an 847-residue protein sequence, read N- to C-terminus: Collagen alpha-1(I) chain (847 aa).

A disordered region spans residues 1–847 (GPMGPSGPRG…PGPIGPPGPR (847 aa)). Positions 20-39 (PQGFQGPPGEPGEPGSSGPM) are enriched in low complexity. The segment covering 51 to 65 (NGDDGEAGKPGRPGE) has biased composition (basic and acidic residues). S85 is modified (phosphoserine). Low complexity-rich tracts occupy residues 93–109 (DAGP…PGEN) and 127–145 (PGAS…TGAA). Residues 147–159 (PPGPTGPAGPPGF) show a composition bias toward pro residues. Low complexity-rich tracts occupy residues 193–208 (AGAA…DGQP), 219–228 (QGPSGAPGPK), 298–314 (PKGI…DGKT), 334–343 (PGPKGAAGEP), 500–543 (PSGP…KGDA), 551–599 (PTGA…NAGA), and 628–638 (SPGADGPAGAP). A Phosphoserine modification is found at S501. Over residues 685–695 (PPGPMGPPGIA) the composition is skewed to pro residues. Residues 697 to 712 (PPGESGREGSPGAEGS) are compositionally biased toward low complexity. Residues 731 to 746 (SGPPGAPGAPGAPGPV) show a composition bias toward pro residues. The span at 763–777 (AGPAGARGPSGPQGP) shows a compositional bias: low complexity. The segment covering 778 to 789 (RGDKGETGEQGD) has biased composition (basic and acidic residues). The segment covering 793 to 838 (SGIQGPPGAPGSPGEQGPSGASGPAGPRGPPGSAGSPGKDGINGIP) has biased composition (low complexity).

The protein belongs to the fibrillar collagen family. Trimers of one alpha 2(I) and two alpha 1(I) chains. Post-translationally, prolines at the third position of the tripeptide repeating unit (G-X-Y) are hydroxylated in some or all of the chains. Forms the fibrils of tendon, ligaments and bones. In bones, the fibrils are mineralized with calcium hydroxyapatite.

Its subcellular location is the secreted. The protein localises to the extracellular space. The protein resides in the extracellular matrix. In terms of biological role, type I collagen is a member of group I collagen (fibrillar forming collagen). This chain is Collagen alpha-1(I) chain, found in Cyclopes didactylus (Silky anteater).